We begin with the raw amino-acid sequence, 476 residues long: Cysteine--tRNA ligase (476 aa).

C29 contributes to the Zn(2+) binding site. A 'HIGH' region motif is present at residues 31–41 (PTVYDYTHLGH). Zn(2+) is bound by residues C209, H234, and E238. The 'KMSKS' region signature appears at 266–270 (KMSKS). K269 contacts ATP.

This sequence belongs to the class-I aminoacyl-tRNA synthetase family. Requires Zn(2+) as cofactor.

It localises to the cytoplasm. The catalysed reaction is tRNA(Cys) + L-cysteine + ATP = L-cysteinyl-tRNA(Cys) + AMP + diphosphate. This Thermococcus onnurineus (strain NA1) protein is Cysteine--tRNA ligase.